The primary structure comprises 310 residues: Methionyl-tRNA formyltransferase (310 aa).

109-112 serves as a coordination point for (6S)-5,6,7,8-tetrahydrofolate; sequence SLLP.

Belongs to the Fmt family.

The catalysed reaction is L-methionyl-tRNA(fMet) + (6R)-10-formyltetrahydrofolate = N-formyl-L-methionyl-tRNA(fMet) + (6S)-5,6,7,8-tetrahydrofolate + H(+). Its function is as follows. Attaches a formyl group to the free amino group of methionyl-tRNA(fMet). The formyl group appears to play a dual role in the initiator identity of N-formylmethionyl-tRNA by promoting its recognition by IF2 and preventing the misappropriation of this tRNA by the elongation apparatus. This is Methionyl-tRNA formyltransferase from Pseudomonas paraeruginosa (strain DSM 24068 / PA7) (Pseudomonas aeruginosa (strain PA7)).